The sequence spans 285 residues: uncharacterized protein (285 aa).

A helical transmembrane segment spans residues 6-26 (IKYFSTIIVAVVAVLAGWWLW).

It belongs to the membrane fusion protein (MFP) (TC 8.A.1) family.

The protein localises to the membrane. This is an uncharacterized protein from Escherichia coli (strain K12).